The sequence spans 72 residues: Crustacean hyperglycemic hormone (72 aa).

Residue Q1 is modified to Pyrrolidone carboxylic acid. The residue at position 3 (F3) is a D-phenylalanine; in form CHH-II. 3 disulfide bridges follow: C7–C43, C23–C39, and C26–C52. Valine amide is present on V72.

In terms of processing, stereoinversion of L-Phe (in CHH-I) to D-Phe (in CHH-II) the two forms are present in a ratio 3:1 (CHH-I/CHH-II). In terms of tissue distribution, produced by the medulla terminalis X-organ in the eyestalks and transported to the sinus gland where they are stored and released.

The protein resides in the secreted. Functionally, hormone found in the sinus gland of isopods and decapods which controls the blood sugar level. Has a secretagogue action over the amylase released from the midgut gland. May act as a stress hormone and may be involved in the control of molting and reproduction. The polypeptide is Crustacean hyperglycemic hormone (Procambarus bouvieri (Mexican crayfish)).